Here is a 361-residue protein sequence, read N- to C-terminus: MGSVDASEKTITGWAARDATGHLSPYTYNLRRTGAEDVVLKVLYCGICHTDLHQTKNHLGASKYPMVPGHEVVGEVVEVGPEVSKYSVGDVVGVGVIVGCCRDCRPCKANVEQYCNKKIWSYNDVYTDGKPTQGGFAGSMVVDQKFVVKIPAGLAPEQAAPLLCAGVTVYSPLKHFGLMTPGLRGGILGLGGVGHMGVKVAKSMGHHVTVISSSDKKRAEAMDDLGADDYLVSSDEAQMAAAMDSLDYIIDTVPVKHPLEPYLALLKMDGKLVLMGVIGEPLSFVSPMVMLGRKTITGSFIGSIEETEEVLRFCVDKGLTSQIEVVKMDYLNQALERLERNDVRYRFVVDVAGSNIDDTAA.

Cys48 is a binding site for Zn(2+). NADP(+) is bound at residue Thr50. His70, Glu71, Cys101, Cys104, Cys107, Cys115, and Cys164 together coordinate Zn(2+). Residues Thr168, 189-194 (GLGGVG), 212-217 (SSSDKK), Thr252, Gly276, and 299-301 (SFI) each bind NADP(+).

This sequence belongs to the zinc-containing alcohol dehydrogenase family. As to quaternary structure, homodimer. Requires Zn(2+) as cofactor.

The enzyme catalyses (E)-cinnamyl alcohol + NADP(+) = (E)-cinnamaldehyde + NADPH + H(+). It catalyses the reaction (E)-coniferol + NADP(+) = (E)-coniferaldehyde + NADPH + H(+). The catalysed reaction is (E)-sinapyl alcohol + NADP(+) = (E)-sinapaldehyde + NADPH + H(+). It carries out the reaction (E)-4-coumaroyl alcohol + NADP(+) = (E)-4-coumaraldehyde + NADPH + H(+). The enzyme catalyses (E)-caffeyl alcohol + NADP(+) = (E)-caffeyl aldehyde + NADPH + H(+). Its pathway is aromatic compound metabolism; phenylpropanoid biosynthesis. Its function is as follows. Involved in lignin biosynthesis. Catalyzes the final step specific for the production of lignin monomers. Catalyzes the NADPH-dependent reduction of coniferaldehyde, 5-hydroxyconiferaldehyde, sinapaldehyde, 4-coumaraldehyde and caffeyl aldehyde to their respective alcohols. This is Probable cinnamyl alcohol dehydrogenase from Lolium perenne (Perennial ryegrass).